A 282-amino-acid chain; its full sequence is Acyl-CoA-binding domain-containing protein 6 (282 aa).

Residues 1 to 12 (MASSFLPSGATT) show a composition bias toward polar residues. The interval 1–34 (MASSFLPSGATTGDSGGELSSGDDSGDVESLQSP) is disordered. Residues 17-31 (GELSSGDDSGDVESL) are compositionally biased toward low complexity. Position 41 is a phosphoserine (S41). One can recognise an ACB domain in the interval 42–127 (LPELFEKAAE…VKKLDPSWNP (86 aa)). An acyl-CoA is bound by residues 69–73 (YARYK) and K95. A Phosphoserine modification is found at S106. Residue Y114 coordinates an acyl-CoA. 2 ANK repeats span residues 191-220 (EGRTLLHWACDRGHKELVTVLLQYRADINC) and 224-253 (EGQTALHYAAACEFLDIVELLLQSGADPTL).

Monomer.

The protein resides in the cytoplasm. Binds long-chain acyl-coenzyme A molecules with a strong preference for unsaturated C18:1-CoA, lower affinity for unsaturated C20:4-CoA, and very weak affinity for saturated C16:0-CoA. Does not bind fatty acids. The polypeptide is Acyl-CoA-binding domain-containing protein 6 (ACBD6) (Bos taurus (Bovine)).